The primary structure comprises 350 residues: GTPase Obg (350 aa).

The region spanning 1–159 (MKLVDEAEIE…RTLKLELKLL (159 aa)) is the Obg domain. The disordered stretch occupies residues 126-147 (GNMHFKSSTNRSPRQALPGEPG). Residues 160–337 (ADVGLLGFPN…IMSRIMAFFD (178 aa)) enclose the OBG-type G domain. GTP is bound by residues 166–173 (GFPNAGKS), 191–195 (FTTLY), 213–216 (DIPG), 287–290 (NKAD), and 318–320 (SAL). Mg(2+)-binding residues include Ser173 and Thr193.

This sequence belongs to the TRAFAC class OBG-HflX-like GTPase superfamily. OBG GTPase family. As to quaternary structure, monomer. Mg(2+) is required as a cofactor.

Its subcellular location is the cytoplasm. Functionally, an essential GTPase which binds GTP, GDP and possibly (p)ppGpp with moderate affinity, with high nucleotide exchange rates and a fairly low GTP hydrolysis rate. Plays a role in control of the cell cycle, stress response, ribosome biogenesis and in those bacteria that undergo differentiation, in morphogenesis control. This is GTPase Obg from Stenotrophomonas maltophilia (strain K279a).